The following is a 411-amino-acid chain: MQAEIIFTGTELLVGEVLNSHAQYLGRRLTEMGIEVIQHTTVGDYWGRMGLVLLQALERADLIFITGGLGPTIDDLTKETVAEVLELDMKLDEASLEAIREHFAKRGMEMPDNNTKQAYFPEGARVLPNTRGTAPGAIVEVDKKAIIILPGPPWEMETMFDNSVVSYLNSLPHRGTLCTSKTFRLTGIGESTVQELIDDLCGMGNPEISFLVNPGVVEVRVTGQGATLEQATGLVQNLSEQVRKRLFQYIFAEDDEKIEQVVGQMLIDAGLTIAVAESCTGGLIEARLSDIPGASRYLVGGVVAYTKQVKERILGVPADTLAQFGAVSRQTAIAMAEGVRRELGSSIGLAVTGVAGPTSSEGKPVGLVYIALSSPTGVCYREYRFPGERKAIRSGTVNAALKMAKHFLQGK.

Belongs to the CinA family.

This is Putative competence-damage inducible protein from Desulforamulus reducens (strain ATCC BAA-1160 / DSM 100696 / MI-1) (Desulfotomaculum reducens).